Consider the following 223-residue polypeptide: Gastrula zinc finger protein XlCGF52.1 (223 aa).

C2H2-type zinc fingers lie at residues 6 to 27, 33 to 55, 61 to 83, 89 to 111, 117 to 139, 145 to 167, 173 to 195, and 201 to 223; these read FTCP…TEDH, FTCM…QRVH, YTCT…ISTH, FPCT…QRIH, FQCL…QRSH, YACS…ERIH, YECN…QKIH, and FTCT…QKIH.

This sequence belongs to the krueppel C2H2-type zinc-finger protein family.

It localises to the nucleus. Its function is as follows. May be involved in transcriptional regulation. In Xenopus laevis (African clawed frog), this protein is Gastrula zinc finger protein XlCGF52.1.